The following is a 294-amino-acid chain: 4-hydroxy-tetrahydrodipicolinate synthase (294 aa).

Pyruvate is bound at residue Thr-47. Tyr-136 functions as the Proton donor/acceptor in the catalytic mechanism. Lys-164 (schiff-base intermediate with substrate) is an active-site residue. Pyruvate is bound at residue Val-206.

Belongs to the DapA family. As to quaternary structure, homotetramer; dimer of dimers.

The protein localises to the cytoplasm. It catalyses the reaction L-aspartate 4-semialdehyde + pyruvate = (2S,4S)-4-hydroxy-2,3,4,5-tetrahydrodipicolinate + H2O + H(+). It functions in the pathway amino-acid biosynthesis; L-lysine biosynthesis via DAP pathway; (S)-tetrahydrodipicolinate from L-aspartate: step 3/4. In terms of biological role, catalyzes the condensation of (S)-aspartate-beta-semialdehyde [(S)-ASA] and pyruvate to 4-hydroxy-tetrahydrodipicolinate (HTPA). This chain is 4-hydroxy-tetrahydrodipicolinate synthase, found in Nostoc sp. (strain PCC 7120 / SAG 25.82 / UTEX 2576).